A 124-amino-acid polypeptide reads, in one-letter code: Small ribosomal subunit protein uS11 (124 aa).

This sequence belongs to the universal ribosomal protein uS11 family. Part of the 30S ribosomal subunit. Interacts with proteins S7 and S18. Binds to IF-3.

Functionally, located on the platform of the 30S subunit, it bridges several disparate RNA helices of the 16S rRNA. Forms part of the Shine-Dalgarno cleft in the 70S ribosome. The chain is Small ribosomal subunit protein uS11 from Anaplasma phagocytophilum (strain HZ).